The chain runs to 718 residues: Cyclomaltodextrin glucanotransferase (718 aa).

The N-terminal stretch at 1–34 (MFQMAKRVLLSTTLTFSLLAGSALPFLPASAIYA) is a signal peptide. The segment at 35 to 172 (DADTAVTNKQ…GIKIIIDFAP (138 aa)) is A1. Ca(2+) contacts are provided by Asp61, Asn63, Asn66, and Asn67. Cys77 and Cys84 are oxidised to a cystine. Residues Gly85 and Asp87 each coordinate Ca(2+). 134–135 (YW) contacts substrate. Ca(2+) is bound at residue Asn173. A b region spans residues 173 to 236 (NHTSPAMETD…NLYDLADLNH (64 aa)). His174 is a binding site for substrate. Ile224 is a Ca(2+) binding site. Substrate is bound at residue 227–230 (NLYD). Asp233 provides a ligand contact to Ca(2+). The tract at residues 237–440 (NNSTIDTYFK…LRKSNPAIAY (204 aa)) is A2. Position 261 (Arg261) interacts with substrate. Asp263 serves as the catalytic Nucleophile. Substrate is bound at residue 266–267 (KH). Residue His267 participates in Ca(2+) binding. The active-site Proton donor is the Glu291. Positions 361, 405, and 409 each coordinate substrate. The c stretch occupies residues 441–528 (GSTQQRWINN…ATAVWQYTAS (88 aa)). The interval 529-614 (ETTPTIGHVG…SNAYNDFTIL (86 aa)) is d. Residues 532 to 612 (PTIGHVGPVM…VNSNAYNDFT (81 aa)) enclose the IPT/TIG domain. The CBM20 domain maps to 613 to 718 (ILSGDQVSVR…GTATVTINWQ (106 aa)). An e region spans residues 615–718 (SGDQVSVRFV…GTATVTINWQ (104 aa)).

Belongs to the glycosyl hydrolase 13 family. In terms of assembly, monomer. The cofactor is Ca(2+).

It localises to the secreted. The catalysed reaction is Cyclizes part of a (1-&gt;4)-alpha-D-glucan chain by formation of a (1-&gt;4)-alpha-D-glucosidic bond.. This is Cyclomaltodextrin glucanotransferase (cgtA) from Bacillus licheniformis.